Here is a 376-residue protein sequence, read N- to C-terminus: Aspartate-semialdehyde dehydrogenase (376 aa).

NADP(+) is bound by residues 11 to 14 (RGMV), 38 to 39 (TS), and Gln74. Arg103 is a phosphate binding site. The Acyl-thioester intermediate role is filled by Cys136. Gln163 contributes to the substrate binding site. NADP(+) is bound by residues 166–167 (SG) and Pro194. Position 242 (Glu242) interacts with substrate. Residue Lys245 coordinates phosphate. A substrate-binding site is contributed by Arg273. His280 (proton acceptor) is an active-site residue. Gln356 is an NADP(+) binding site.

The protein belongs to the aspartate-semialdehyde dehydrogenase family. Homodimer.

It catalyses the reaction L-aspartate 4-semialdehyde + phosphate + NADP(+) = 4-phospho-L-aspartate + NADPH + H(+). It participates in amino-acid biosynthesis; L-lysine biosynthesis via DAP pathway; (S)-tetrahydrodipicolinate from L-aspartate: step 2/4. It functions in the pathway amino-acid biosynthesis; L-methionine biosynthesis via de novo pathway; L-homoserine from L-aspartate: step 2/3. The protein operates within amino-acid biosynthesis; L-threonine biosynthesis; L-threonine from L-aspartate: step 2/5. In terms of biological role, catalyzes the NADPH-dependent formation of L-aspartate-semialdehyde (L-ASA) by the reductive dephosphorylation of L-aspartyl-4-phosphate. In Bordetella pertussis (strain Tohama I / ATCC BAA-589 / NCTC 13251), this protein is Aspartate-semialdehyde dehydrogenase.